The chain runs to 451 residues: Probable glycine dehydrogenase (decarboxylating) subunit 1 (451 aa).

It belongs to the GcvP family. N-terminal subunit subfamily. The glycine cleavage system is composed of four proteins: P, T, L and H. In this organism, the P 'protein' is a heterodimer of two subunits.

The enzyme catalyses N(6)-[(R)-lipoyl]-L-lysyl-[glycine-cleavage complex H protein] + glycine + H(+) = N(6)-[(R)-S(8)-aminomethyldihydrolipoyl]-L-lysyl-[glycine-cleavage complex H protein] + CO2. In terms of biological role, the glycine cleavage system catalyzes the degradation of glycine. The P protein binds the alpha-amino group of glycine through its pyridoxal phosphate cofactor; CO(2) is released and the remaining methylamine moiety is then transferred to the lipoamide cofactor of the H protein. The protein is Probable glycine dehydrogenase (decarboxylating) subunit 1 of Staphylococcus aureus (strain MSSA476).